A 305-amino-acid chain; its full sequence is Methionyl-tRNA formyltransferase (305 aa).

Position 110–113 (110–113 (SLLP)) interacts with (6S)-5,6,7,8-tetrahydrofolate.

Belongs to the Fmt family.

It catalyses the reaction L-methionyl-tRNA(fMet) + (6R)-10-formyltetrahydrofolate = N-formyl-L-methionyl-tRNA(fMet) + (6S)-5,6,7,8-tetrahydrofolate + H(+). Functionally, attaches a formyl group to the free amino group of methionyl-tRNA(fMet). The formyl group appears to play a dual role in the initiator identity of N-formylmethionyl-tRNA by promoting its recognition by IF2 and preventing the misappropriation of this tRNA by the elongation apparatus. The sequence is that of Methionyl-tRNA formyltransferase from Ureaplasma urealyticum serovar 10 (strain ATCC 33699 / Western).